The primary structure comprises 362 residues: E3 ubiquitin-protein ligase TM129 (362 aa).

Topologically, residues Met-1–Val-6 are lumenal. A helical membrane pass occupies residues Thr-7–His-27. Over Ser-28–Thr-56 the chain is Cytoplasmic. Residues Ala-57 to Ala-77 form a helical membrane-spanning segment. Over Ala-78 to Arg-94 the chain is Lumenal. Residues Ala-95 to Ser-115 traverse the membrane as a helical segment. Topologically, residues Arg-116–Arg-362 are cytoplasmic. An RING-type; degenerate zinc finger spans residues Cys-285–Arg-350.

This sequence belongs to the TMEM129 family. As to quaternary structure, integral component of ER-resident dislocation complexes.

Its subcellular location is the endoplasmic reticulum membrane. The enzyme catalyses S-ubiquitinyl-[E2 ubiquitin-conjugating enzyme]-L-cysteine + [acceptor protein]-L-lysine = [E2 ubiquitin-conjugating enzyme]-L-cysteine + N(6)-ubiquitinyl-[acceptor protein]-L-lysine.. It functions in the pathway protein modification; protein ubiquitination. Functionally, E3 ubiquitin-protein ligase involved in ER-associated protein degradation, preferentially associates with the E2 enzyme UBE2J2. Exploited by viral US11 proteins to mediate HLA class I proteins degradation. The polypeptide is E3 ubiquitin-protein ligase TM129 (TMEM129) (Bos taurus (Bovine)).